A 266-amino-acid polypeptide reads, in one-letter code: MRYLKKLAWFISVIILGIFIIGCDSSSDTGEKAKEDSKEEQIKKSFAKTLDMYPIKNLEDLYDKEGYRDSEFKKGDKGMWMIYTDFAKSNKPGVLDNEGMILNLDRNTRTAKGYYFVDTIYDNHENSYSKNYRVEMKNNKIILLDKVEDQKLKERIENFKFFGQYADFKSLKSYNNGDVSINSNVPSYDAKFKMSNKDENVKQLRSRYNIPTEKAPILKMHIDGDLKGSSVGYKKLEIDFSKEENSELSVVDSLNFQPAKKNKDDE.

The signal sequence occupies residues 1 to 22 (MRYLKKLAWFISVIILGIFIIG). The N-palmitoyl cysteine moiety is linked to residue Cys-23. Cys-23 carries S-diacylglycerol cysteine lipidation.

It belongs to the staphylococcal tandem lipoprotein family.

The protein resides in the cell membrane. This is an uncharacterized protein from Staphylococcus aureus (strain USA300).